The following is a 388-amino-acid chain: MIISAASDYRAAAEARLPPFLFHYIDGGAYAEHTLRRNVSDLADVALRQRVLRNMSDLRLSTELFGETLAMPVALAPVGLTGMYARRGEVQAARAAAARGIPFTLSTVSVCPIEEVAPAIERPMWFQLYVLKDRGFMRNALERAKAAGVTTLVFTVDMPTPGARYRDAHSGMSGPNASLRRMLQAVTHPRWAWDVGLLGKPHDLGNISAYRGSPTGLQDYIGWLGANFDPSIAWKDLEWIREFWTGPMVIKGILDPEDARDAVRFGADGIVVSNHGGRQLDGVLSSARALPAIADAVKGELKILADSGIRSGLDVVRMLALGADAVLLGRAFVYALAAAGQAGVENLLTLIEKEMRVAMTLTGTHSIADISADALSRVTRERADAISP.

Positions 1-380 (MIISAASDYR…SADALSRVTR (380 aa)) constitute an FMN hydroxy acid dehydrogenase domain. Y24 contributes to the substrate binding site. The FMN site is built by S106 and Q127. Y129 is a substrate binding site. T155 contributes to the FMN binding site. Position 164 (R164) interacts with substrate. K251 contacts FMN. The Proton acceptor role is filled by H275. R278 contributes to the substrate binding site. 306–330 (DSGIRSGLDVVRMLALGADAVLLGR) contacts FMN.

The protein belongs to the FMN-dependent alpha-hydroxy acid dehydrogenase family. The cofactor is FMN.

The protein resides in the cell inner membrane. It catalyses the reaction (S)-lactate + A = pyruvate + AH2. Its function is as follows. Catalyzes the conversion of L-lactate to pyruvate. Is coupled to the respiratory chain. This Xanthomonas axonopodis pv. citri (strain 306) protein is L-lactate dehydrogenase.